The sequence spans 125 residues: Small ribosomal subunit protein uS13 (125 aa).

A disordered region spans residues 92 to 125 (RRSLPVRGQRTQTNARTRKGKRKTVAGKKKATKK). The span at 107 to 125 (RTRKGKRKTVAGKKKATKK) shows a compositional bias: basic residues.

It belongs to the universal ribosomal protein uS13 family. Part of the 30S ribosomal subunit. Forms a loose heterodimer with protein S19. Forms two bridges to the 50S subunit in the 70S ribosome.

Its function is as follows. Located at the top of the head of the 30S subunit, it contacts several helices of the 16S rRNA. In the 70S ribosome it contacts the 23S rRNA (bridge B1a) and protein L5 of the 50S subunit (bridge B1b), connecting the 2 subunits; these bridges are implicated in subunit movement. Contacts the tRNAs in the A and P-sites. The polypeptide is Small ribosomal subunit protein uS13 (Chlorobium phaeobacteroides (strain DSM 266 / SMG 266 / 2430)).